A 103-amino-acid chain; its full sequence is Co-chaperonin GroES (103 aa).

It belongs to the GroES chaperonin family. In terms of assembly, heptamer of 7 subunits arranged in a ring. Interacts with the chaperonin GroEL.

The protein localises to the cytoplasm. Together with the chaperonin GroEL, plays an essential role in assisting protein folding. The GroEL-GroES system forms a nano-cage that allows encapsulation of the non-native substrate proteins and provides a physical environment optimized to promote and accelerate protein folding. GroES binds to the apical surface of the GroEL ring, thereby capping the opening of the GroEL channel. The chain is Co-chaperonin GroES from Synechococcus sp. (strain CC9902).